Consider the following 154-residue polypeptide: Large ribosomal subunit protein uL23z (154 aa).

Belongs to the universal ribosomal protein uL23 family.

Its function is as follows. Binds to a specific region on the 26S rRNA. This Arabidopsis thaliana (Mouse-ear cress) protein is Large ribosomal subunit protein uL23z (RPL23AA).